Reading from the N-terminus, the 285-residue chain is 4-diphosphocytidyl-2-C-methyl-D-erythritol kinase (285 aa).

Lys-11 is a catalytic residue. ATP is bound at residue 93–103; the sequence is PLAAGLAGGSA. Asp-135 is an active-site residue.

The protein belongs to the GHMP kinase family. IspE subfamily.

The enzyme catalyses 4-CDP-2-C-methyl-D-erythritol + ATP = 4-CDP-2-C-methyl-D-erythritol 2-phosphate + ADP + H(+). Its pathway is isoprenoid biosynthesis; isopentenyl diphosphate biosynthesis via DXP pathway; isopentenyl diphosphate from 1-deoxy-D-xylulose 5-phosphate: step 3/6. Catalyzes the phosphorylation of the position 2 hydroxy group of 4-diphosphocytidyl-2C-methyl-D-erythritol. The protein is 4-diphosphocytidyl-2-C-methyl-D-erythritol kinase of Moorella thermoacetica (strain ATCC 39073 / JCM 9320).